The sequence spans 58 residues: Sperm protamine P2 (58 aa).

Residues 1-58 (RRRRRRGKGRGKKRKGKGKKRGKGRRRGSKGRKKKKGKGKKRKRRRRRRRKGSKGKGK) are disordered.

In terms of tissue distribution, gonads.

It is found in the nucleus. It localises to the chromosome. In terms of biological role, protamines substitute for histones in the chromatin of sperm during the haploid phase of spermatogenesis. They compact sperm DNA into a highly condensed, stable and inactive complex. This Bolinus brandaris (Purple dye murex) protein is Sperm protamine P2.